Consider the following 359-residue polypeptide: 3-dehydroquinate synthase (359 aa).

Residues Glu72–Lys77, Gly106–Asp110, Thr130–Ser131, Lys143, Lys152, and Cys170–Thr173 contribute to the NAD(+) site. 3 residues coordinate Zn(2+): Glu185, His248, and His264.

This sequence belongs to the sugar phosphate cyclases superfamily. Dehydroquinate synthase family. Co(2+) serves as cofactor. It depends on Zn(2+) as a cofactor. The cofactor is NAD(+).

It localises to the cytoplasm. The enzyme catalyses 7-phospho-2-dehydro-3-deoxy-D-arabino-heptonate = 3-dehydroquinate + phosphate. Its pathway is metabolic intermediate biosynthesis; chorismate biosynthesis; chorismate from D-erythrose 4-phosphate and phosphoenolpyruvate: step 2/7. Functionally, catalyzes the conversion of 3-deoxy-D-arabino-heptulosonate 7-phosphate (DAHP) to dehydroquinate (DHQ). This is 3-dehydroquinate synthase from Dehalococcoides mccartyi (strain ATCC BAA-2266 / KCTC 15142 / 195) (Dehalococcoides ethenogenes (strain 195)).